The sequence spans 280 residues: Phosphonates import ATP-binding protein PhnC 1 (280 aa).

The 245-residue stretch at 2–246 folds into the ABC transporter domain; that stretch reads LRIENLDKRY…VLTRIYGEED (245 aa). 35 to 42 contacts ATP; it reads GPSGAGKS. The disordered stretch occupies residues 247-266; it reads WSKTSDEDADSVDAPPRAAD.

It belongs to the ABC transporter superfamily. Phosphonates importer (TC 3.A.1.9.1) family. In terms of assembly, the complex is composed of two ATP-binding proteins (PhnC), two transmembrane proteins (PhnE) and a solute-binding protein (PhnD).

It localises to the cell inner membrane. It catalyses the reaction phosphonate(out) + ATP + H2O = phosphonate(in) + ADP + phosphate + H(+). Functionally, part of the ABC transporter complex PhnCDE involved in phosphonates import. Responsible for energy coupling to the transport system. The chain is Phosphonates import ATP-binding protein PhnC 1 from Rhodopseudomonas palustris (strain HaA2).